A 543-amino-acid chain; its full sequence is Chaperonin GroEL 1 (543 aa).

ATP-binding positions include 29–32 (TLGP), lysine 50, 86–90 (DGTTT), glycine 414, and aspartate 493. Residues 524-543 (KEDKGAPAGMGGMPPGGGMY) are disordered. Residues 531–543 (AGMGGMPPGGGMY) are compositionally biased toward gly residues.

It belongs to the chaperonin (HSP60) family. As to quaternary structure, forms a cylinder of 14 subunits composed of two heptameric rings stacked back-to-back. Interacts with the co-chaperonin GroES.

The protein resides in the cytoplasm. The catalysed reaction is ATP + H2O + a folded polypeptide = ADP + phosphate + an unfolded polypeptide.. Functionally, together with its co-chaperonin GroES, plays an essential role in assisting protein folding. The GroEL-GroES system forms a nano-cage that allows encapsulation of the non-native substrate proteins and provides a physical environment optimized to promote and accelerate protein folding. The polypeptide is Chaperonin GroEL 1 (Syntrophobacter fumaroxidans (strain DSM 10017 / MPOB)).